Here is a 261-residue protein sequence, read N- to C-terminus: tRNA pseudouridine synthase A (261 aa).

Catalysis depends on Asp-51, which acts as the Nucleophile. Tyr-109 contributes to the substrate binding site.

Belongs to the tRNA pseudouridine synthase TruA family. In terms of assembly, homodimer.

It carries out the reaction uridine(38/39/40) in tRNA = pseudouridine(38/39/40) in tRNA. Formation of pseudouridine at positions 38, 39 and 40 in the anticodon stem and loop of transfer RNAs. This chain is tRNA pseudouridine synthase A, found in Shewanella baltica (strain OS155 / ATCC BAA-1091).